A 351-amino-acid chain; its full sequence is Ferrochelatase (351 aa).

Positions 220 and 301 each coordinate Fe cation.

This sequence belongs to the ferrochelatase family.

The protein resides in the cytoplasm. The catalysed reaction is heme b + 2 H(+) = protoporphyrin IX + Fe(2+). Its pathway is porphyrin-containing compound metabolism; protoheme biosynthesis; protoheme from protoporphyrin-IX: step 1/1. In terms of biological role, catalyzes the ferrous insertion into protoporphyrin IX. The chain is Ferrochelatase from Rhodobacter capsulatus (Rhodopseudomonas capsulata).